Reading from the N-terminus, the 280-residue chain is Homeobox protein Hox-B1b (280 aa).

The segment at 46–65 is disordered; that stretch reads GRLAAPTSAPHQSPGLPLHH. The short motif at 170-175 is the Antp-type hexapeptide element; the sequence is TFDWMK. The homeobox DNA-binding region spans 195 to 254; that stretch reads HNVIRTNFTTKQLTELEKEFHFNKYLTRARRVEVAASLELNETQVKIWFQNRRMKQKKRE. A disordered region spans residues 249 to 280; that stretch reads KQKKREKLGGVLVHREKASGPESSPKAKESEP. Basic and acidic residues predominate over residues 261-280; that stretch reads VHREKASGPESSPKAKESEP.

Belongs to the Antp homeobox family. Labial subfamily.

It is found in the nucleus. Sequence-specific transcription factor which is part of a developmental regulatory system that provides cells with specific positional identities on the anterior-posterior axis. The chain is Homeobox protein Hox-B1b (hoxb1b) from Takifugu rubripes (Japanese pufferfish).